Reading from the N-terminus, the 1494-residue chain is ABC multidrug transporter atrG (1494 aa).

Residues 1–11 are compositionally biased toward polar residues; that stretch reads MSLLGTINPNL. Disordered regions lie at residues 1 to 48 and 84 to 105; these read MSLL…RTSD and FSVS…TLNP. Asn-41 carries N-linked (GlcNAc...) asparagine glycosylation. Residues Asn-141 and Asn-340 are each glycosylated (N-linked (GlcNAc...) asparagine). The region spanning 162 to 416 is the ABC transporter 1 domain; sequence LQVGALFRAV…FTTMGFECPE (255 aa). A run of 2 helical transmembrane segments spans residues 527–547 and 561–581; these read LTMS…SVFY and ALLF…ILTL. Asn-622 is a glycosylation site (N-linked (GlcNAc...) asparagine). A run of 3 helical transmembrane segments spans residues 636-656, 669-689, and 778-798; these read GPFF…SMLF, ALVP…FTIP, and GIMF…TEYI. N-linked (GlcNAc...) asparagine glycosylation is present at Asn-835. In terms of domain architecture, ABC transporter 2 spans 852 to 1095; it reads FHWQDVCYDI…LASYFERNGA (244 aa). 888–895 lines the ATP pocket; it reads GVSGAGKT. Helical transmembrane passes span 1191 to 1211, 1227 to 1247, 1276 to 1296, 1312 to 1332, and 1351 to 1371; these read YIYS…FSFF, IFML…NFVT, LPWN…PIGL, LMWL…HMMI, and LCLI…FWIF. Residues Asn-1410 and Asn-1432 are each glycosylated (N-linked (GlcNAc...) asparagine). The chain crosses the membrane as a helical span at residues 1463-1483; it reads FGIMWAFIVFNIAAAVFIYWL.

This sequence belongs to the ABC transporter superfamily. ABCG family. PDR (TC 3.A.1.205) subfamily.

It is found in the cell membrane. It carries out the reaction (R)-miconazole(in) + ATP + H2O = (R)-miconazole(out) + ADP + phosphate + H(+). Pleiotropic ABC efflux transporter involved in the basal level of azole susceptibility. Confers resistance to miconazole and clotrimazole. The sequence is that of ABC multidrug transporter atrG from Aspergillus oryzae (strain ATCC 42149 / RIB 40) (Yellow koji mold).